Consider the following 740-residue polypeptide: ATP-dependent RNA helicase DDX1 (740 aa).

Positions 1 to 295 (MAAFSEMGVM…APKALIVEPS (295 aa)) are necessary for interaction with HNRNPK. The tract at residues 1–448 (MAAFSEMGVM…DTVHHVVVPV (448 aa)) is interaction with dsRNA. The segment at 1-525 (MAAFSEMGVM…KIDCDNLEQY (525 aa)) is necessary for interaction with RELA. The region spanning 2–428 (AAFSEMGVMP…SEKIMHFPTW (427 aa)) is the Helicase ATP-binding domain. Residue 46-53 (AETGSGKT) coordinates ATP. The B30.2/SPRY domain maps to 70–247 (DQQEGKKGKT…LKFNFGEEEF (178 aa)). N6-acetyllysine is present on residues Lys239 and Lys268. Lys281 carries the post-translational modification N6-acetyllysine; alternate. A Glycyl lysine isopeptide (Lys-Gly) (interchain with G-Cter in SUMO2); alternate cross-link involves residue Lys281. The DEAD box signature appears at 370 to 373 (DEAD). Ser481 bears the Phosphoserine mark. The region spanning 493-681 (KGEYAVRAIK…QVEPDIKVPV (189 aa)) is the Helicase C-terminal domain. The segment at 525-740 (YFMQQGGGPD…YLPNQLFRTF (216 aa)) is necessary for interaction with HNRNPK.

Belongs to the DEAD box helicase family. DDX1 subfamily. Found in a multi-helicase-TICAM1 complex at least composed of DHX36, DDX1, DDX21 and TICAM1; this complex exists in resting cells with or without poly(I:C) RNA ligand stimulation. Interacts with DHX36. Interacts (via B30.2/SPRY domain) with DDX21 (via N-terminus); this interaction serves as bridges to TICAM1. Interacts with FAM98A (via N- and C-terminus). Interacts with PHF5A (via C-terminus). Interacts with MBNL1. Interacts with CSTF2. Interacts with HNRNPK. Interacts with ATM. Interacts with RELA (via C-terminus). Component of the tRNA-splicing ligase complex. Interacts with PQBP1. Interacts with ERCC6. Phosphorylated by ATM kinase; phosphorylation is increased in response to ionizing radiation (IR).

It localises to the nucleus. Its subcellular location is the cytoplasm. It is found in the cytoplasmic granule. The protein localises to the cytosol. The protein resides in the mitochondrion. It carries out the reaction ATP + H2O = ADP + phosphate + H(+). Functionally, acts as an ATP-dependent RNA helicase, able to unwind both RNA-RNA and RNA-DNA duplexes. Possesses 5' single-stranded RNA overhang nuclease activity. Possesses ATPase activity on various RNA, but not DNA polynucleotides. May play a role in RNA clearance at DNA double-strand breaks (DSBs), thereby facilitating the template-guided repair of transcriptionally active regions of the genome. Together with RELA, acts as a coactivator to enhance NF-kappa-B-mediated transcriptional activation. Acts as a positive transcriptional regulator of cyclin CCND2 expression. Binds to the cyclin CCND2 promoter region. Associates with chromatin at the NF-kappa-B promoter region via association with RELA. Binds to poly(A) RNA. May be involved in 3'-end cleavage and polyadenylation of pre-mRNAs. Component of the tRNA-splicing ligase complex required to facilitate the enzymatic turnover of catalytic subunit RTCB: together with archease (ZBTB8OS), acts by facilitating the guanylylation of RTCB, a key intermediate step in tRNA ligation. Component of a multi-helicase-TICAM1 complex that acts as a cytoplasmic sensor of viral double-stranded RNA (dsRNA) and plays a role in the activation of a cascade of antiviral responses including the induction of pro-inflammatory cytokines via the adapter molecule TICAM1. Specifically binds (via helicase ATP-binding domain) on both short and long poly(I:C) dsRNA. In Macaca fascicularis (Crab-eating macaque), this protein is ATP-dependent RNA helicase DDX1 (DDX1).